A 636-amino-acid chain; its full sequence is MGKVIGIDLGTSNSAAAVMMGGKPTIIPAAEGQTAAGKAFPSVVAFSKEGELLVGEPARRQAVTNPDNTIIAAKRKMGSDYTFKIQDKEYKPQQISSFILQKIKKDAEAFVGETVEKAVITVPAYFDDNQRQATKDAGTIAGLDVVRIINEPTAASLAFGLDKAKEDMKILVFDFGGGTLDVTIMEMGGGVFEVMSTSGDTQLGGTDMDKVLIDYIVDEFKKKEGVDLSQDTTAMTRIREAAEKAKIELSTVMETDVNLPFIAHDPSSGAKNLELRLTRSKLDELIGPIVDRCKPSIQKALEDAKLSNSDINKIVMIGGPTRIPLVKKFVSEVIGKEVESGVDPMEAVAMGAAIQAGIIAGDVTSDIVLLDVTPLTLGIETLGGVREPLIERNTTIPTSKGKVFTTAADNQTAVTIHVVQGERPMATDNVSLGSFNLTDLPPAPRGVPQIEVKFDIDANGIINVTAKDLGTQKEAKITIETKTKLSEEEIEKLKEDAEKFSEEDKKKKEKIDLKNEAESYIYTTEKLVNHDLKDKISQEQGIKITDAVKEVKEVLDKEPEELKPKLEALQSIVNEVTTELYKNAAPPPGADGQQGADGQQGADGQQGADGQQGADGQQGADGQTTESSSNDETKTN.

A disordered region spans residues 579–636; that stretch reads ELYKNAAPPPGADGQQGADGQQGADGQQGADGQQGADGQQGADGQTTESSSNDETKTN. A compositionally biased stretch (low complexity) spans 590–623; sequence ADGQQGADGQQGADGQQGADGQQGADGQQGADGQ.

Belongs to the heat shock protein 70 family.

In terms of biological role, acts as a chaperone. This Nitrosopumilus maritimus (strain SCM1) protein is Chaperone protein DnaK.